We begin with the raw amino-acid sequence, 73 residues long: Translation initiation factor IF-1 (73 aa).

The 73-residue stretch at 1 to 73 (MSEKEAGIEV…SRGRITYRDK (73 aa)) folds into the S1-like domain.

The protein belongs to the IF-1 family. As to quaternary structure, component of the 30S ribosomal translation pre-initiation complex which assembles on the 30S ribosome in the order IF-2 and IF-3, IF-1 and N-formylmethionyl-tRNA(fMet); mRNA recruitment can occur at any time during PIC assembly.

It localises to the cytoplasm. One of the essential components for the initiation of protein synthesis. Stabilizes the binding of IF-2 and IF-3 on the 30S subunit to which N-formylmethionyl-tRNA(fMet) subsequently binds. Helps modulate mRNA selection, yielding the 30S pre-initiation complex (PIC). Upon addition of the 50S ribosomal subunit IF-1, IF-2 and IF-3 are released leaving the mature 70S translation initiation complex. In Anaeromyxobacter dehalogenans (strain 2CP-C), this protein is Translation initiation factor IF-1.